The chain runs to 287 residues: Oxaloacetate decarboxylase (287 aa).

Ser-50 contributes to the substrate binding site. Asp-88 provides a ligand contact to Mg(2+). The substrate site is built by Arg-159 and His-235.

Belongs to the isocitrate lyase/PEP mutase superfamily. Oxaloacetate decarboxylase family. As to quaternary structure, homotetramer; dimer of dimers. Requires Mg(2+) as cofactor.

The enzyme catalyses oxaloacetate + H(+) = pyruvate + CO2. In terms of biological role, catalyzes the decarboxylation of oxaloacetate into pyruvate. Seems to play a role in maintaining cellular concentrations of bicarbonate and pyruvate. The protein is Oxaloacetate decarboxylase of Marinomonas sp. (strain MWYL1).